Consider the following 450-residue polypeptide: Probable glycylpeptide N-tetradecanoyltransferase (450 aa).

Residues 1–28 (MSHGHSHDGAPCGGHHGDDGAGGSRPSV) form a disordered region. The tetradecanoyl-CoA site is built by Q67, F68, W69, F200, L201, C202, V203, S209, R211, V212, and A213.

The protein belongs to the NMT family.

It is found in the cytoplasm. The enzyme catalyses N-terminal glycyl-[protein] + tetradecanoyl-CoA = N-tetradecanoylglycyl-[protein] + CoA + H(+). Functionally, adds a myristoyl group to the N-terminal glycine residue of certain cellular proteins. This chain is Probable glycylpeptide N-tetradecanoyltransferase (nmt-1), found in Caenorhabditis elegans.